The following is a 290-amino-acid chain: ATP synthase gamma chain (290 aa).

Belongs to the ATPase gamma chain family. As to quaternary structure, F-type ATPases have 2 components, CF(1) - the catalytic core - and CF(0) - the membrane proton channel. CF(1) has five subunits: alpha(3), beta(3), gamma(1), delta(1), epsilon(1). CF(0) has three main subunits: a, b and c.

The protein resides in the cell inner membrane. Its function is as follows. Produces ATP from ADP in the presence of a proton gradient across the membrane. The gamma chain is believed to be important in regulating ATPase activity and the flow of protons through the CF(0) complex. This chain is ATP synthase gamma chain, found in Buchnera aphidicola subsp. Acyrthosiphon pisum (strain APS) (Acyrthosiphon pisum symbiotic bacterium).